A 70-amino-acid chain; its full sequence is Myotoxin (70 aa).

An N-terminal signal peptide occupies residues 1 to 22 (MKILYLLFAFLFLAFLSEPGNA). 3 disulfides stabilise this stretch: C26/C58, C33/C52, and C40/C59.

This sequence belongs to the crotamine-myotoxin family. In terms of assembly, monomer. In terms of tissue distribution, expressed by the venom gland.

Its subcellular location is the secreted. Functionally, cationic peptide that possesses multiple functions. It acts as a cell-penetrating peptide (CPP), and as a potent voltage-gated potassium channel (Kv) inhibitor. It exhibits antimicrobial activities, hind limb paralysis, and severe muscle necrosis by a non-enzymatic mechanism. This is Myotoxin from Crotalus adamanteus (Eastern diamondback rattlesnake).